Reading from the N-terminus, the 196-residue chain is Imidazoleglycerol-phosphate dehydratase (196 aa).

The protein belongs to the imidazoleglycerol-phosphate dehydratase family.

Its subcellular location is the cytoplasm. It catalyses the reaction D-erythro-1-(imidazol-4-yl)glycerol 3-phosphate = 3-(imidazol-4-yl)-2-oxopropyl phosphate + H2O. The protein operates within amino-acid biosynthesis; L-histidine biosynthesis; L-histidine from 5-phospho-alpha-D-ribose 1-diphosphate: step 6/9. This chain is Imidazoleglycerol-phosphate dehydratase, found in Desulfitobacterium hafniense (strain Y51).